The chain runs to 20 residues: FLAKKVGKQLASHLAKKQLE.

Glu20 is subject to Glutamic acid 1-amide.

Expressed by the venom gland.

The protein localises to the secreted. The sequence is that of Short cationic peptide-4a from Cupiennius salei (American wandering spider).